A 484-amino-acid polypeptide reads, in one-letter code: Glutamyl-tRNA(Gln) amidotransferase subunit A (484 aa).

Active-site charge relay system residues include Lys-76 and Ser-151. The Acyl-ester intermediate role is filled by Ser-175.

Belongs to the amidase family. GatA subfamily. As to quaternary structure, heterotrimer of A, B and C subunits.

The enzyme catalyses L-glutamyl-tRNA(Gln) + L-glutamine + ATP + H2O = L-glutaminyl-tRNA(Gln) + L-glutamate + ADP + phosphate + H(+). In terms of biological role, allows the formation of correctly charged Gln-tRNA(Gln) through the transamidation of misacylated Glu-tRNA(Gln) in organisms which lack glutaminyl-tRNA synthetase. The reaction takes place in the presence of glutamine and ATP through an activated gamma-phospho-Glu-tRNA(Gln). The protein is Glutamyl-tRNA(Gln) amidotransferase subunit A of Cellvibrio japonicus (strain Ueda107) (Pseudomonas fluorescens subsp. cellulosa).